The following is a 201-amino-acid chain: Potassium-transporting ATPase KdpC subunit (201 aa).

Residues 10–30 traverse the membrane as a helical segment; that stretch reads VVLVVLTVICGLAYPLAMTGI. Residues 67 to 105 form a disordered region; the sequence is HGRPSATSAADPADPTKTVSSPYNAANSSGSNLGPTSKA. A compositionally biased stretch (low complexity) spans 70–82; that stretch reads PSATSAADPADPT. Over residues 83-105 the composition is skewed to polar residues; the sequence is KTVSSPYNAANSSGSNLGPTSKA.

This sequence belongs to the KdpC family. As to quaternary structure, the system is composed of three essential subunits: KdpA, KdpB and KdpC.

The protein resides in the cell inner membrane. Part of the high-affinity ATP-driven potassium transport (or Kdp) system, which catalyzes the hydrolysis of ATP coupled with the electrogenic transport of potassium into the cytoplasm. This subunit acts as a catalytic chaperone that increases the ATP-binding affinity of the ATP-hydrolyzing subunit KdpB by the formation of a transient KdpB/KdpC/ATP ternary complex. The protein is Potassium-transporting ATPase KdpC subunit of Rhodopseudomonas palustris (strain BisB5).